The primary structure comprises 78 residues: Acyl carrier protein (78 aa).

Residues 2-77 enclose the Carrier domain; sequence SDIAERVKKI…DAVKFIEKAQ (76 aa). Serine 37 bears the O-(pantetheine 4'-phosphoryl)serine mark.

The protein belongs to the acyl carrier protein (ACP) family. 4'-phosphopantetheine is transferred from CoA to a specific serine of apo-ACP by AcpS. This modification is essential for activity because fatty acids are bound in thioester linkage to the sulfhydryl of the prosthetic group.

The protein resides in the cytoplasm. It participates in lipid metabolism; fatty acid biosynthesis. Functionally, carrier of the growing fatty acid chain in fatty acid biosynthesis. The sequence is that of Acyl carrier protein from Sinorhizobium fredii (strain NBRC 101917 / NGR234).